The primary structure comprises 223 residues: MSGALKENSGKPSEVEYTHFKDLQALEMERGRLYETIVVTWDDSMVGNAAPIGVLCTGDDTVTLYLYQGTRTVENVLNNGRFTVNVTLDPLIFTDSTLGDLEEDMFSHYRDFLHLRGADAFFTAEVVSVKKLVKRDRFGESELHVVKARAGDVMRAESFRMALNRGIYAVIESLIAYTRAEFSDPLVLRERIAEMNRVARKVGGPREKEAMRRIIQALESKIS.

It to M.jannaschii MJ1453.

This is an uncharacterized protein from Methanothermobacter thermautotrophicus (strain ATCC 29096 / DSM 1053 / JCM 10044 / NBRC 100330 / Delta H) (Methanobacterium thermoautotrophicum).